A 510-amino-acid chain; its full sequence is Ribonuclease Y (510 aa).

The chain crosses the membrane as a helical span at residues 4–24; it reads LLWAVVALLAGLAGGAGIGVY. Residues 200–260 enclose the KH domain; sequence TVSTVNLPSE…VRREVARVAL (61 aa). Residues 326 to 419 enclose the HD domain; it reads VLQHSLECAL…VIAADAISGA (94 aa).

Belongs to the RNase Y family.

The protein localises to the cell membrane. Endoribonuclease that initiates mRNA decay. This chain is Ribonuclease Y, found in Chloroflexus aurantiacus (strain ATCC 29366 / DSM 635 / J-10-fl).